A 3902-amino-acid polypeptide reads, in one-letter code: Mediator of RNA polymerase II transcription subunit 12 (3902 aa).

Disordered stretches follow at residues 414 to 576 (ESLT…EELP), 619 to 674 (FEPF…NPKL), 694 to 940 (AFDP…LEAL), 977 to 1029 (VVEK…PEPP), 1812 to 1831 (TSHKTKDVKRKSANKTTETR), 2463 to 2675 (TVEP…NRKQ), 2719 to 2771 (AGAS…SSSM), 2876 to 3151 (RIME…PEMQ), 3195 to 3549 (LQAG…SSNQ), and 3563 to 3902 (AGLN…QQQY). Residues 420-430 (EPEEDPEEGPE) show a composition bias toward acidic residues. The span at 709-721 (PTPPEAPPPPPPV) shows a compositional bias: pro residues. Composition is skewed to basic and acidic residues over residues 740-802 (EDGK…EHLN), 912-928 (KAGDDASKKTKEGKKPD), 977-1004 (VVEKDKDKTPEKATEGEKEAEKDAEKLP), and 1018-1027 (KTPEKPKTPE). Basic residues predominate over residues 1812 to 1824 (TSHKTKDVKRKSA). The required for nuclear localization stretch occupies residues 2409-3902 (QTTRLDKVAK…MGQFPNQQQY (1494 aa)). Over residues 2474 to 2547 (AAVKKPEEET…VTAKDTEKDT (74 aa)) the composition is skewed to basic and acidic residues. Residues 2480–2526 (EEETAEKKKDEAKKADEKTTKADDEKKKDETADAKKDNEKQKEEKDK) are a coiled coil. Low complexity-rich tracts occupy residues 2548-2566 (AAPTDAAKAAAAPVAAAPD), 2614-2632 (SRANANAETAAAAETSSTT), and 2734-2748 (PHPGMQHQSGMQHQG). Basic and acidic residues predominate over residues 2876 to 2979 (RIMEEQRILR…ERLERERVAR (104 aa)). Low complexity-rich tracts occupy residues 2980–3001 (EALAAQQAQQAQQAQQAQQAQQ), 3010–3143 (QQQR…QRNP), 3196–3205 (QAGQAAGQQQ), and 3226–3236 (PQQQQQQPQQP). The span at 3237-3248 (GTSQIPNTTPTR) shows a compositional bias: polar residues. 3 stretches are compositionally biased toward low complexity: residues 3250–3275 (ANPMQGQQQQAGMQNYQNQPVLGQPG), 3284–3295 (GQQQQNQFQRQG), and 3317–3389 (GQQQ…FGRQ). Residues 3391–3409 (APNQENFQQQPGFNQNAAG) show a composition bias toward polar residues. Composition is skewed to low complexity over residues 3410–3446 (QNYQRPEQQQQSQNQWNQLNQQMRPQQPQQPSQQQQN), 3454–3539 (QSQQ…QGNQ), and 3570–3619 (SSGN…RPGM). Positions 3620-3649 (GQQGMGQQGMGQQGGMGQSGRGQPGMGGQS) are enriched in gly residues. Composition is skewed to low complexity over residues 3663-3700 (MGQPGMQQSGMQQQHGMQQQQPGAQQSGLQQAGMQQQH), 3710-3742 (QQGRNNYGSMGQQGQQSGQQQAQQHQQMSQQAQ), and 3760-3830 (QQQQ…HRGQ). Gly residues predominate over residues 3831–3841 (GQQGHGMGGAG). Over residues 3842-3888 (QQHQQVPQQQQNQYFQPQQQQDQRMQQQPGGQQQQQQGQSGQQQNNQ) the composition is skewed to low complexity. Over residues 3889-3902 (HYNNMGQFPNQQQY) the composition is skewed to polar residues.

It belongs to the Mediator complex subunit 12 family. Component of the Mediator complex.

It localises to the nucleus. In terms of biological role, component of the Mediator complex, a coactivator involved in regulated gene transcription of nearly all RNA polymerase II-dependent genes. Mediator functions as a bridge to convey information from gene-specific regulatory proteins to the basal RNA polymerase II transcription machinery. Mediator is recruited to promoters by direct interactions with regulatory proteins and serves as a scaffold for the assembly of a functional preinitiation complex with RNA polymerase II and the general transcription factors. This is Mediator of RNA polymerase II transcription subunit 12 (dpy-22) from Caenorhabditis briggsae.